Reading from the N-terminus, the 672-residue chain is Negative growth regulatory protein NGR1 (672 aa).

An N-acetylmethionine modification is found at Met1. 2 stretches are compositionally biased toward polar residues: residues 1–13 and 23–32; these read MMSN…QRQE and SSTVETSTEP. Disordered regions lie at residues 1 to 40 and 77 to 102; these read MMSN…WMGD and SSTS…NSTD. Met2 is subject to N-acetylserine. RRM domains are found at residues 36-159, 192-271, and 360-432; these read LWMG…YSPT, FSLF…YATP, and TTVF…WGRP. Positions 77 to 96 are enriched in low complexity; the sequence is SSTSSSNNNTSEENAENQQS. Ser524 is subject to Phosphoserine. The segment at 640–672 is disordered; sequence LNIAPNSNNSKSSIMNKHPNRNNVPPIHPSLLH. Positions 645 to 656 are enriched in low complexity; sequence NSNNSKSSIMNK.

Functionally, may be an RNA-binding protein involved in control of an RNA processing pathway that influences the regulation of cell growth in early log phase. Can bind to RNA and single-stranded DNA but not double-stranded DNA. This chain is Negative growth regulatory protein NGR1 (NGR1), found in Saccharomyces cerevisiae (strain ATCC 204508 / S288c) (Baker's yeast).